The chain runs to 252 residues: MKFNNLKISLELLFLYAQIKVKLTHLKHYSTRCSTLSLITVFPLDLLNYLSLIIIDVYYEICINYPNNFWLDSTSFDSRFLFILQNIEKKILRHNNYELLTKSINFKNYNLFLSSANLITHEDEKLFIWFFHILSEILIHKHKSSTISVKLLSIVGVHLIVKTLLIFLLLINNQSVVNSIFLSDSKIYHPQFINFNFWWQNLNQLVLRRIYSLYPIYVIKNNVLTTNYVFLPYFNSYLLQSNLTTWFSKLLK.

It is found in the plastid. Its subcellular location is the chloroplast. This is an uncharacterized protein from Guillardia theta (Cryptophyte).